Consider the following 66-residue polypeptide: Panusin (66 aa).

An N-terminal signal peptide occupies residues 1–22 (MKTKAVLMLMLLVLVAATLVQG). Residues 23 to 26 (EPEP) constitute a propeptide that is removed on maturation. 3 disulfide bridges follow: cysteine 32–cysteine 54, cysteine 39–cysteine 61, and cysteine 44–cysteine 60. At tyrosine 65 the chain carries Tyrosine amide.

In terms of assembly, forms dimers and higher-order oligomers. In terms of processing, contains 3 disulfide bonds.

In terms of biological role, antimicrobial peptide. Has antibacterial activity against Gram-positive bacteria S.aureus ATCC 29737 and B.subtilis ATCC 6633 as well as against Gram-negative bacteria E.coli ATCC 10536 and K.pneumoniae ATCC 10031. This chain is Panusin, found in Panulirus argus (Caribbean spiny lobster).